A 353-amino-acid chain; its full sequence is uncharacterized protein (353 aa).

The HTH luxR-type domain maps to 18–83; the sequence is NIEFPCLLSE…TLWRDVFLRF (66 aa). The H-T-H motif DNA-binding region spans 42-61; sequence VNEISKRRNRSIKTVSCQKM. An EAL domain is found at 98 to 350; the sequence is NSSVLPVVSS…AFVRKLLASL (253 aa).

This is an uncharacterized protein from Escherichia coli (strain K12).